A 341-amino-acid polypeptide reads, in one-letter code: MFKELLKKCLRGESLSAEEAEKIMNDIMNGKVPAAQIASVLTILTYRGETVDEIVGFVRGMKNNMNAISLEELNVVDTCGTGGDGASTFNISTASAIVASAAGVKVAKHGNRAVSSKSGSADVLEHLDIWIQGNEKEVKNAVADLNMSFLFAPLYHPAMKHVAATRKELGFRTVFNALGPLANPTNCTKQVIGVYSIELARKLAEALVVLGANHVLLVAGRDGLDEISATDVTDVVEVQGNVITEYTLAPEDVHLQRGKLEDLVVEDAKSSAELIESLFLNKSNVTAKNAVVLNSAAAIYVSGNVSTFEEGVAVALETIESGAAYTQLQRLKSKKVVEHAQ.

Residues glycine 80, 83–84, threonine 88, 90–93, 108–116, and serine 120 contribute to the 5-phospho-alpha-D-ribose 1-diphosphate site; these read GD, NIST, and KHGNRAVSS. Anthranilate is bound at residue glycine 80. Mg(2+) is bound at residue serine 92. Asparagine 111 is an anthranilate binding site. Arginine 166 is an anthranilate binding site. Mg(2+)-binding residues include aspartate 225 and glutamate 226.

This sequence belongs to the anthranilate phosphoribosyltransferase family. In terms of assembly, homodimer. Mg(2+) is required as a cofactor.

The enzyme catalyses N-(5-phospho-beta-D-ribosyl)anthranilate + diphosphate = 5-phospho-alpha-D-ribose 1-diphosphate + anthranilate. It functions in the pathway amino-acid biosynthesis; L-tryptophan biosynthesis; L-tryptophan from chorismate: step 2/5. Its function is as follows. Catalyzes the transfer of the phosphoribosyl group of 5-phosphorylribose-1-pyrophosphate (PRPP) to anthranilate to yield N-(5'-phosphoribosyl)-anthranilate (PRA). The sequence is that of Anthranilate phosphoribosyltransferase from Priestia megaterium (strain ATCC 12872 / QMB1551) (Bacillus megaterium).